The primary structure comprises 163 residues: Small ribosomal subunit protein eS10A (163 aa).

A disordered region spans residues 92-163 (LTQTTRSNAV…GFGRASRYDN (72 aa)). Over residues 105–116 (GGPGGPGGGFGG) the composition is skewed to gly residues.

The protein belongs to the eukaryotic ribosomal protein eS10 family.

Its subcellular location is the cytoplasm. This chain is Small ribosomal subunit protein eS10A (RpS10a), found in Drosophila melanogaster (Fruit fly).